A 250-amino-acid chain; its full sequence is Indole-3-glycerol phosphate synthase (250 aa).

The protein belongs to the TrpC family.

The enzyme catalyses 1-(2-carboxyphenylamino)-1-deoxy-D-ribulose 5-phosphate + H(+) = (1S,2R)-1-C-(indol-3-yl)glycerol 3-phosphate + CO2 + H2O. It participates in amino-acid biosynthesis; L-tryptophan biosynthesis; L-tryptophan from chorismate: step 4/5. This is Indole-3-glycerol phosphate synthase from Bacillus pumilus (strain SAFR-032).